The sequence spans 333 residues: Fructose-1,6-bisphosphatase class 1 (333 aa).

Positions 89, 110, 112, and 113 each coordinate Mg(2+). Substrate is bound by residues 113–116 (DGSS), asparagine 206, tyrosine 239, 257–259 (YLY), and lysine 269. Position 275 (glutamate 275) interacts with Mg(2+).

The protein belongs to the FBPase class 1 family. As to quaternary structure, homotetramer. The cofactor is Mg(2+).

The protein resides in the cytoplasm. It carries out the reaction beta-D-fructose 1,6-bisphosphate + H2O = beta-D-fructose 6-phosphate + phosphate. Its pathway is carbohydrate biosynthesis; gluconeogenesis. This Sodalis glossinidius (strain morsitans) protein is Fructose-1,6-bisphosphatase class 1.